Reading from the N-terminus, the 382-residue chain is Putative glutamate--cysteine ligase 2-1 (382 aa).

It belongs to the glutamate--cysteine ligase type 2 family. YbdK subfamily.

The catalysed reaction is L-cysteine + L-glutamate + ATP = gamma-L-glutamyl-L-cysteine + ADP + phosphate + H(+). ATP-dependent carboxylate-amine ligase which exhibits weak glutamate--cysteine ligase activity. This chain is Putative glutamate--cysteine ligase 2-1, found in Nocardioides sp. (strain ATCC BAA-499 / JS614).